The chain runs to 273 residues: Putative pyruvate, phosphate dikinase regulatory protein 2 (273 aa).

151 to 158 (GVSRTSKT) is a binding site for ADP.

Belongs to the pyruvate, phosphate/water dikinase regulatory protein family. PDRP subfamily.

The catalysed reaction is N(tele)-phospho-L-histidyl/L-threonyl-[pyruvate, phosphate dikinase] + ADP = N(tele)-phospho-L-histidyl/O-phospho-L-threonyl-[pyruvate, phosphate dikinase] + AMP + H(+). It carries out the reaction N(tele)-phospho-L-histidyl/O-phospho-L-threonyl-[pyruvate, phosphate dikinase] + phosphate + H(+) = N(tele)-phospho-L-histidyl/L-threonyl-[pyruvate, phosphate dikinase] + diphosphate. In terms of biological role, bifunctional serine/threonine kinase and phosphorylase involved in the regulation of the pyruvate, phosphate dikinase (PPDK) by catalyzing its phosphorylation/dephosphorylation. This is Putative pyruvate, phosphate dikinase regulatory protein 2 from Syntrophomonas wolfei subsp. wolfei (strain DSM 2245B / Goettingen).